Reading from the N-terminus, the 295-residue chain is Defective in cullin neddylation protein 1 (295 aa).

The UBA-like domain occupies 8–45; the sequence is QKTKLRQFVQWTQVTEAVSLNFLAKANWNIEYAMTLYF. Residues 60–272 form the DCUN1 domain; it reads VDRSNIERLF…LIDQFVDYCR (213 aa).

Interacts with the cullin cul-3. Interacts with ubiquitin via its UBA-like domain. Interacts with ned-8/nedd8.

It is found in the nucleus. Required for neddylation of cullin components of SCF-type E3 ubiquitin ligase complexes. Neddylation of cullins play an essential role in the regulation of SCF-type complexes activity. Does not act by preventing deneddylation, but rather facilitates neddylation, possibly by acting with rbx-1 to recruit the Nedd8-charged E2 enzyme to the cullin component of SCF-type complexes. The protein is Defective in cullin neddylation protein 1 (dcn-1) of Caenorhabditis elegans.